The chain runs to 315 residues: Secreted mono- and diacylglycerol lipase LIP2 (315 aa).

The signal sequence occupies residues 1-21 (MACFRVILYLSVIFFVQCVFA). The cysteines at positions 68 and 308 are disulfide-linked. Asparagine 74 carries an N-linked (GlcNAc...) asparagine glycan. Serine 182 (nucleophile) is an active-site residue. The active site involves aspartate 240. The N-linked (GlcNAc...) asparagine glycan is linked to asparagine 265. Histidine 292 is an active-site residue.

This sequence belongs to the AB hydrolase superfamily. Lipase family. Class 3 subfamily.

It localises to the secreted. It catalyses the reaction a monoacylglycerol + H2O = glycerol + a fatty acid + H(+). It carries out the reaction a diacylglycerol + H2O = a monoacylglycerol + a fatty acid + H(+). Its function is as follows. Secreted lipase involved in Dandruff and seborrheic dermatitis (D/SD) probably via lipase-mediated breakdown of sebaceous lipids and release of irritating free fatty acids. Shows activity against monoglyceride and diglyceride substrates and generates free oleic acid from the substrates mono- and diolein. Able to cleave the oleic acid from both the 1 and the 2 position of the glycerol backbone as 1,2 isomers of diolein were converted into oleic acid and glycerol. Due to an absence of fatty acid synthase genes in Malassezia species, secretory lipases are essential for the yeast to generate free fatty acids from degradation of sebum and assimilate them as lipid sources for growth. Plays an essential role at the pathogen-host interface during disease progression. Also performs the reverse reaction to build diacylglycerols from monoacylglycerols. The sequence is that of Secreted mono- and diacylglycerol lipase LIP2 from Malassezia restricta (strain ATCC 96810 / NBRC 103918 / CBS 7877) (Seborrheic dermatitis infection agent).